The following is a 127-amino-acid chain: Dual endothelin-1/VEGF signal peptide receptor (127 aa).

The Extracellular portion of the chain corresponds to 1-65 (MNALYVTTVP…EMKSRWNWGS (65 aa)). Residues 66 to 84 (ITCIICFTCVGSQLSMSSS) form a helical membrane-spanning segment. Residues 85 to 127 (KASNFSGPLQLYQRGIGHITNSYKRPQAPAWPCLSSGTMGRSH) are Cytoplasmic-facing.

As to expression, widely expressed with higher levels in kidney and aorta.

The protein localises to the cell membrane. Its function is as follows. Dual receptor for both endothelin-1 and the signal sequence of vascular endothelial growth factor A. Does not act as a receptor for angiotensin-2. Does not bind the VEGFA mature protein. May play a role in angiogenesis with a significant role in cardiovascular and neural development. This Mus musculus (Mouse) protein is Dual endothelin-1/VEGF signal peptide receptor.